Here is a 259-residue protein sequence, read N- to C-terminus: Deoxyribose-phosphate aldolase (259 aa).

Catalysis depends on D104, which acts as the Proton donor/acceptor. Residue K168 is the Schiff-base intermediate with acetaldehyde of the active site. Residue K200 is the Proton donor/acceptor of the active site.

It belongs to the DeoC/FbaB aldolase family. DeoC type 2 subfamily.

The protein localises to the cytoplasm. It catalyses the reaction 2-deoxy-D-ribose 5-phosphate = D-glyceraldehyde 3-phosphate + acetaldehyde. It participates in carbohydrate degradation; 2-deoxy-D-ribose 1-phosphate degradation; D-glyceraldehyde 3-phosphate and acetaldehyde from 2-deoxy-alpha-D-ribose 1-phosphate: step 2/2. Its function is as follows. Catalyzes a reversible aldol reaction between acetaldehyde and D-glyceraldehyde 3-phosphate to generate 2-deoxy-D-ribose 5-phosphate. The polypeptide is Deoxyribose-phosphate aldolase (Agrobacterium fabrum (strain C58 / ATCC 33970) (Agrobacterium tumefaciens (strain C58))).